The chain runs to 745 residues: MAWGWWRRWRRWPARRWRRRRRRRPLRRRRAGRPARRYRRRRTVRTRRRRWGRRRYRRGWRRRTYVRKGRHRKKKKRLILRQWQPATRRRCTITGYLPIVFCGHTKGNKNYALHSDDYTPQGQPFGGALSTTSFSLKVLFDQHQRGLNKWSFPNDQLDLARYRGCKFIFYRTKQTDWIGQYDISEPYKLDKYSCPNYHPGNLIKAKHKFLIPSYDTNPRGRQKIIVKIPPPDLFVDKWYTQEDLCSVNLVSLAVSAASFLHPFGSPQTDNPCYTFQVLKEFYYQAIGFSATDESRNYVFNVLYEENSYWESNITPFYVINVKKGSNTXDYMSPXISDSHFRNKVNTNYNWYTYNAKSHKNDLHXLRRAYFKQLTTEGPQQTSSEKGYASQWTTPTTDAYEYHLGMFSTIFLAPDRPVPRFPCAYQDVTYNPLMDKGVGNHVWFQYNTKADTQLIVTGGSCKAHIEDIPLWAAFYGYSDFIESELGPFVDAETVGLICVICPYTKPPMYNKTNPMMGYVFYDRNFGDGKWIDGRGKIEPYWQVRWRPEMLFQETVMADIVQTGPFSYKDELKNSTLVAKYKFYFTWGGNMMFQQTIKNPCKTDGRPTDSDRHPRGIQVADPEQMGPRWVFHSFDWRRGYLSEGAIKRLHEKPLDYESYFTQPKRPRIFPPTEAAEGEFREPEKGSYSEEERSQASAEEQATEETVLLLKRRLREQRKLEQQLQFLTREMFKTQAGLHINPMLLSQR.

3 disordered regions span residues 23-44, 598-619, and 660-700; these read RRPL…RRTV, PCKT…QVAD, and QPKR…EQAT. Basic and acidic residues-rich tracts occupy residues 599–612 and 675–691; these read CKTD…DRHP and GEFR…EERS.

It belongs to the anelloviridae capsid protein family.

Its subcellular location is the virion. Functionally, self assemble to form an icosahedral capsid. This Homo sapiens (Human) protein is Capsid protein.